The following is a 681-amino-acid chain: DNA-directed RNA polymerase subunit beta' (681 aa).

Residues C69, C71, C87, and C90 each contribute to the Zn(2+) site. Residues D489, D491, and D493 each coordinate Mg(2+).

It belongs to the RNA polymerase beta' chain family. RpoC1 subfamily. In terms of assembly, in plastids the minimal PEP RNA polymerase catalytic core is composed of four subunits: alpha, beta, beta', and beta''. When a (nuclear-encoded) sigma factor is associated with the core the holoenzyme is formed, which can initiate transcription. It depends on Mg(2+) as a cofactor. Zn(2+) serves as cofactor.

It localises to the plastid. The protein localises to the chloroplast. The enzyme catalyses RNA(n) + a ribonucleoside 5'-triphosphate = RNA(n+1) + diphosphate. Functionally, DNA-dependent RNA polymerase catalyzes the transcription of DNA into RNA using the four ribonucleoside triphosphates as substrates. This Anthoceros angustus (Hornwort) protein is DNA-directed RNA polymerase subunit beta'.